Consider the following 208-residue polypeptide: Type 4 adapter protein LvgA (208 aa).

Residues 184-208 (GYGYPPESPRENYKHPVSSATTARK) form a disordered region.

In terms of assembly, the T4BSS is a complex nanomachine composed of several subcomplexes. This subunit is part of the Type IV Coupling Complex (T4CC), a subcomplex composed of the DotLMNYZ core and the IcmSW-LvgA adapter subunits, linked by the C-terminal tail of DotL.

It localises to the cytoplasm. In terms of biological role, component of the Dot/Icm type IVB secretion system (T4BSS), which is used to inject bacterial effector proteins into eukaryotic host cells. Part of a subcomplex which recruits effector proteins and delivers them to the core transmembrane subcomplex. Is a critical subunit for binding a subset of effector proteins. Recognizes more than one type of binding motif. May be a critical factor that confers host specificity. Necessary for full virulence of the bacterium in guinea pigs and presumably humans. This Legionella pneumophila protein is Type 4 adapter protein LvgA.